Reading from the N-terminus, the 319-residue chain is Peroxidase 62 (319 aa).

Positions 1-22 (MGLVRSFALVIVFLSCLIAVYG) are cleaved as a signal peptide. 4 disulfide bridges follow: Cys-34/Cys-110, Cys-67/Cys-72, Cys-116/Cys-315, and Cys-195/Cys-226. Residue His-65 is the Proton acceptor of the active site. Residues Asp-66, Val-69, Gly-71, Asp-73, and Ser-75 each coordinate Ca(2+). Pro-157 is a binding site for substrate. Heme b is bound at residue His-188. Residue Thr-189 coordinates Ca(2+). Asn-204 is a glycosylation site (N-linked (GlcNAc...) asparagine). Ca(2+)-binding residues include Asp-239, Ser-242, and Asp-247. Asn-253 is a glycosylation site (N-linked (GlcNAc...) asparagine).

It belongs to the peroxidase family. Classical plant (class III) peroxidase subfamily. Heme b serves as cofactor. Ca(2+) is required as a cofactor. Mainly expressed in roots.

Its subcellular location is the secreted. The enzyme catalyses 2 a phenolic donor + H2O2 = 2 a phenolic radical donor + 2 H2O. Removal of H(2)O(2), oxidation of toxic reductants, biosynthesis and degradation of lignin, suberization, auxin catabolism, response to environmental stresses such as wounding, pathogen attack and oxidative stress. These functions might be dependent on each isozyme/isoform in each plant tissue. This chain is Peroxidase 62 (PER62), found in Arabidopsis thaliana (Mouse-ear cress).